Here is a 117-residue protein sequence, read N- to C-terminus: Large ribosomal subunit protein bL19 (117 aa).

It belongs to the bacterial ribosomal protein bL19 family.

Functionally, this protein is located at the 30S-50S ribosomal subunit interface and may play a role in the structure and function of the aminoacyl-tRNA binding site. The protein is Large ribosomal subunit protein bL19 of Exiguobacterium sibiricum (strain DSM 17290 / CCUG 55495 / CIP 109462 / JCM 13490 / 255-15).